The chain runs to 166 residues: 2-amino-4-hydroxy-6-hydroxymethyldihydropteridine pyrophosphokinase (166 aa).

Belongs to the HPPK family.

The enzyme catalyses 6-hydroxymethyl-7,8-dihydropterin + ATP = (7,8-dihydropterin-6-yl)methyl diphosphate + AMP + H(+). The protein operates within cofactor biosynthesis; tetrahydrofolate biosynthesis; 2-amino-4-hydroxy-6-hydroxymethyl-7,8-dihydropteridine diphosphate from 7,8-dihydroneopterin triphosphate: step 4/4. In terms of biological role, catalyzes the transfer of pyrophosphate from adenosine triphosphate (ATP) to 6-hydroxymethyl-7,8-dihydropterin, an enzymatic step in folate biosynthesis pathway. This is 2-amino-4-hydroxy-6-hydroxymethyldihydropteridine pyrophosphokinase (folK) from Streptococcus pyogenes serotype M6 (strain ATCC BAA-946 / MGAS10394).